The chain runs to 757 residues: MWFLPAALPLLPLLLLLGQAPPSRPQSLGTMKLRLVGPGSGPEEGRLEVLHQGQWGTVCDDDFALQEATVACRQLGFEGALTWAHSAKYGSGEGPIWLDNVHCVGTESSLDQCGSNGWGVSDCTHSEDVGVVCNPQRHRGSVSERVSNALGPQDRRLEEVRLKPILASAKRQSPVTEGAVEVKYEGHWRQVCDQGWTRNNSRVVCGMLGFPSEAPVDSHHYRKVWDSKMKDPNSRLKSLTKKNSFWIHRVNCLGTEPHMANCQVQVAPAQGKLRPACPGGMHAVVSCVAGPRFRPPKAKPGRKESRAEEMKVRLRSGAQVGEGRVEVLMNRQWGTVCDHGWNLISASVVCRQLGFGSAREALFGAQLGQALGPIHLSEVRCRGYERTLSDCPSLEGSQNGCQHDNDAAVRCNIPNMGFQDQVRLAGGRSPEEGVVEVQVEVNGVQRWGAVCSDHWGLSEAMVACRQLGLGFASHAIKDTWYWQGTPGAREVVMSGVHCSGTELALQQCQRHGPVHCSHGTGRFSAGVSCTDSAPDLVMNAQLVQETAYLEDRPLSLLYCAHEENCLSQSADRMDWPYGHRRLLRFSSQIHNLGRADFRPKMGRHGWIWHQCHRHYHSIEVFTHYDLLTLNGSKVAEGHKASFCLEDTNCPTGMQRRYACANFGEQGVTVGCWDTYRHDIDCQWVDITDVGPGDYIFQVVVNPKFEVAESDFSNNMMRCRCKYDGQRVWLHNCHTGDSYRANTELSQEQEQRLRNNLI.

A signal peptide spans 1–25; sequence MWFLPAALPLLPLLLLLGQAPPSRP. 4 SRCR domains span residues 33–134, 160–288, 312–412, and 422–530; these read LRLV…VVCN, VRLK…VSCV, VRLR…VRCN, and VRLA…VSCT. Cystine bridges form between cysteine 59–cysteine 123, cysteine 72–cysteine 133, cysteine 103–cysteine 113, cysteine 192–cysteine 277, cysteine 205–cysteine 287, cysteine 252–cysteine 262, cysteine 337–cysteine 401, cysteine 350–cysteine 411, cysteine 381–cysteine 391, cysteine 451–cysteine 516, cysteine 464–cysteine 529, cysteine 498–cysteine 508, cysteine 559–cysteine 565, cysteine 611–cysteine 659, cysteine 643–cysteine 649, cysteine 671–cysteine 681, and cysteine 718–cysteine 732. Asparagine 199 carries N-linked (GlcNAc...) asparagine glycosylation. The tract at residues 534–737 is lysyl-oxidase like; it reads PDLVMNAQLV…WLHNCHTGDS (204 aa). 3 residues coordinate Cu cation: histidine 612, histidine 614, and histidine 616. The N-linked (GlcNAc...) asparagine glycan is linked to asparagine 630. Positions 639 to 675 form a cross-link, lysine tyrosylquinone (Lys-Tyr); that stretch reads KASFCLEDTNCPTGMQRRYACANFGEQGVTVGCWDTY. A 2',4',5'-topaquinone modification is found at tyrosine 675.

Belongs to the lysyl oxidase family. Cu cation serves as cofactor. It depends on lysine tyrosylquinone residue as a cofactor. In terms of processing, the lysine tyrosylquinone cross-link (LTQ) is generated by condensation of the epsilon-amino group of a lysine with a topaquinone produced by oxidation of tyrosine. May be proteolytically cleaved by BMP1.

The protein localises to the secreted. It localises to the extracellular space. It carries out the reaction L-lysyl-[protein] + O2 + H2O = (S)-2-amino-6-oxohexanoyl-[protein] + H2O2 + NH4(+). Catalyzes the oxidative deamination of lysine and hydroxylysine residues in collagen and elastin, resulting in the formation of covalent cross-linkages, and the stabilization of collagen and elastin fibers. This chain is Lysyl oxidase homolog 4 (LOXL4), found in Bos taurus (Bovine).